The following is a 441-amino-acid chain: Ribosomal protein uS12 methylthiotransferase RimO (441 aa).

The MTTase N-terminal domain maps to 8 to 118 (PKIGFVSLGC…VLQHVHHYVP (111 aa)). [4Fe-4S] cluster-binding residues include Cys-17, Cys-53, Cys-82, Cys-150, Cys-154, and Cys-157. Positions 136-373 (LTPRHYAYLK…MQLQQQISAE (238 aa)) constitute a Radical SAM core domain. The region spanning 376–441 (QEKVGREILV…DEYDLWGSRV (66 aa)) is the TRAM domain.

The protein belongs to the methylthiotransferase family. RimO subfamily. [4Fe-4S] cluster is required as a cofactor.

The protein localises to the cytoplasm. It catalyses the reaction L-aspartate(89)-[ribosomal protein uS12]-hydrogen + (sulfur carrier)-SH + AH2 + 2 S-adenosyl-L-methionine = 3-methylsulfanyl-L-aspartate(89)-[ribosomal protein uS12]-hydrogen + (sulfur carrier)-H + 5'-deoxyadenosine + L-methionine + A + S-adenosyl-L-homocysteine + 2 H(+). Catalyzes the methylthiolation of an aspartic acid residue of ribosomal protein uS12. In Salmonella paratyphi B (strain ATCC BAA-1250 / SPB7), this protein is Ribosomal protein uS12 methylthiotransferase RimO.